The following is a 413-amino-acid chain: Multifunctional CCA protein (413 aa).

Residues Gly8 and Arg11 each contribute to the ATP site. Residues Gly8 and Arg11 each coordinate CTP. Mg(2+)-binding residues include Asp21 and Asp23. 3 residues coordinate ATP: Arg91, Arg143, and Arg146. CTP-binding residues include Arg91, Arg143, and Arg146. The HD domain maps to 232–333 (TGVHVMMVVD…VRLFERSDAL (102 aa)).

The protein belongs to the tRNA nucleotidyltransferase/poly(A) polymerase family. Bacterial CCA-adding enzyme type 1 subfamily. Monomer. Can also form homodimers and oligomers. It depends on Mg(2+) as a cofactor. Ni(2+) is required as a cofactor.

It carries out the reaction a tRNA precursor + 2 CTP + ATP = a tRNA with a 3' CCA end + 3 diphosphate. The enzyme catalyses a tRNA with a 3' CCA end + 2 CTP + ATP = a tRNA with a 3' CCACCA end + 3 diphosphate. Catalyzes the addition and repair of the essential 3'-terminal CCA sequence in tRNAs without using a nucleic acid template. Adds these three nucleotides in the order of C, C, and A to the tRNA nucleotide-73, using CTP and ATP as substrates and producing inorganic pyrophosphate. tRNA 3'-terminal CCA addition is required both for tRNA processing and repair. Also involved in tRNA surveillance by mediating tandem CCA addition to generate a CCACCA at the 3' terminus of unstable tRNAs. While stable tRNAs receive only 3'-terminal CCA, unstable tRNAs are marked with CCACCA and rapidly degraded. This Burkholderia vietnamiensis (strain G4 / LMG 22486) (Burkholderia cepacia (strain R1808)) protein is Multifunctional CCA protein.